We begin with the raw amino-acid sequence, 261 residues long: Cytosolic Fe-S cluster assembly factor Nubp2 homolog (261 aa).

An ATP-binding site is contributed by 14 to 21; that stretch reads GKGGVGKS. [4Fe-4S] cluster contacts are provided by C188 and C191.

Belongs to the Mrp/NBP35 ATP-binding proteins family. NUBP2/CFD1 subfamily. In terms of assembly, heterotetramer of 2 Nubp1 and 2 Nubp2 chains. The cofactor is [4Fe-4S] cluster.

The protein localises to the cytoplasm. In terms of biological role, component of the cytosolic iron-sulfur (Fe/S) protein assembly (CIA) machinery. Required for maturation of extramitochondrial Fe-S proteins. The Nubp1-Nubp2 heterotetramer forms a Fe-S scaffold complex, mediating the de novo assembly of an Fe-S cluster and its transfer to target apoproteins. This is Cytosolic Fe-S cluster assembly factor Nubp2 homolog from Drosophila ananassae (Fruit fly).